A 230-amino-acid chain; its full sequence is Ubiquitin carboxyl-terminal hydrolase isozyme L3 (230 aa).

The 225-residue stretch at 5-229 (RWLPLEANPE…LRFNAIALSA (225 aa)) folds into the UCH catalytic domain. Residues 8-13 (PLEANP) form an interaction with ubiquitin region. Cysteine 95 serves as the catalytic Nucleophile. Serine 130 is modified (phosphoserine). The tract at residues 152 to 159 (AHEGQTEA) is interaction with ubiquitin. Crossover loop which restricts access of large ubiquitin adducts to the active site. Histidine 169 acts as the Proton donor in catalysis. Positions 219–224 (ELRFNA) are interaction with ubiquitin.

The protein belongs to the peptidase C12 family. In terms of assembly, preferentially binds diubiquitin; the interaction does not hydrolyze diubiquitin but, in vitro, inhibits the hydrolyzing activity on other substrates. In terms of tissue distribution, ubiquitously expressed, with highest levels in brain, liver, heart, thymus, kidney and testis. Highly expressed in the cauda epididymidis, in meiotic pachytene spermatocytes and post-meiotic spematids. In the retina, enriched in the photoreceptor inner segment.

Its subcellular location is the cytoplasm. The catalysed reaction is Thiol-dependent hydrolysis of ester, thioester, amide, peptide and isopeptide bonds formed by the C-terminal Gly of ubiquitin (a 76-residue protein attached to proteins as an intracellular targeting signal).. Inhibited by monoubiquitin and diubiquitin. In terms of biological role, deubiquitinating enzyme (DUB) that controls levels of cellular ubiquitin through processing of ubiquitin precursors and ubiquitinated proteins. Thiol protease that recognizes and hydrolyzes a peptide bond at the C-terminal glycine of either ubiquitin or NEDD8. Has a 10-fold preference for Arg and Lys at position P3'', and exhibits a preference towards 'Lys-48'-linked ubiquitin chains. Deubiquitinates ENAC in apical compartments, thereby regulating apical membrane recycling. Indirectly increases the phosphorylation of IGFIR, AKT and FOXO1 and promotes insulin-signaling and insulin-induced adipogenesis. Required for stress-response retinal, skeletal muscle and germ cell maintenance. May be involved in working memory. Can hydrolyze UBB(+1), a mutated form of ubiquitin which is not effectively degraded by the proteasome. The protein is Ubiquitin carboxyl-terminal hydrolase isozyme L3 (Uchl3) of Mus musculus (Mouse).